Reading from the N-terminus, the 175-residue chain is Small ribosomal subunit protein uS7 (175 aa).

This sequence belongs to the universal ribosomal protein uS7 family. As to quaternary structure, part of the 30S ribosomal subunit. Contacts proteins S9 and S11.

One of the primary rRNA binding proteins, it binds directly to 16S rRNA where it nucleates assembly of the head domain of the 30S subunit. Is located at the subunit interface close to the decoding center, probably blocks exit of the E-site tRNA. This Legionella pneumophila (strain Paris) protein is Small ribosomal subunit protein uS7.